The following is a 427-amino-acid chain: Flotillin-1 (427 aa).

3 positions are modified to phosphoserine: serine 19, serine 163, and serine 385.

It belongs to the band 7/mec-2 family. Flotillin subfamily. Heterooligomeric complex of flotillin-1 and flotillin-2 and caveolin-1 and caveolin-2. Interacts with ECPAS.

It localises to the cell membrane. The protein resides in the endosome. It is found in the membrane. Its subcellular location is the caveola. The protein localises to the melanosome. It localises to the membrane raft. In terms of biological role, may act as a scaffolding protein within caveolar membranes, functionally participating in formation of caveolae or caveolae-like vesicles. The sequence is that of Flotillin-1 (FLOT1) from Bos taurus (Bovine).